The following is a 167-amino-acid chain: Sulfopyruvate decarboxylase subunit alpha (167 aa).

The protein belongs to the ComD family. In terms of assembly, heterododecamer composed of 6 subunits alpha and 6 subunits beta.

The enzyme catalyses 3-sulfopyruvate + H(+) = sulfoacetaldehyde + CO2. It participates in cofactor biosynthesis; coenzyme M biosynthesis; sulfoacetaldehyde from phosphoenolpyruvate and sulfite: step 4/4. Functionally, involved in the biosynthesis of the coenzyme M (2-mercaptoethanesulfonic acid). Catalyzes the decarboxylation of sulfopyruvate to sulfoacetaldehyde. In Methanococcus maripaludis (strain DSM 14266 / JCM 13030 / NBRC 101832 / S2 / LL), this protein is Sulfopyruvate decarboxylase subunit alpha (comD).